The chain runs to 109 residues: Large ribosomal subunit protein uL23 (109 aa).

Belongs to the universal ribosomal protein uL23 family. In terms of assembly, part of the 50S ribosomal subunit. Contacts protein L29, and trigger factor when it is bound to the ribosome.

In terms of biological role, one of the early assembly proteins it binds 23S rRNA. One of the proteins that surrounds the polypeptide exit tunnel on the outside of the ribosome. Forms the main docking site for trigger factor binding to the ribosome. The protein is Large ribosomal subunit protein uL23 of Prosthecochloris aestuarii (strain DSM 271 / SK 413).